A 314-amino-acid chain; its full sequence is tRNA pseudouridine synthase B (314 aa).

A substrate-binding site is contributed by His-43. The active-site Nucleophile is Asp-48. The substrate site is built by Tyr-76, Tyr-179, and Leu-200.

It belongs to the pseudouridine synthase TruB family. Type 1 subfamily.

It carries out the reaction uridine(55) in tRNA = pseudouridine(55) in tRNA. Its function is as follows. Responsible for synthesis of pseudouridine from uracil-55 in the psi GC loop of transfer RNAs. This chain is tRNA pseudouridine synthase B, found in Salmonella arizonae (strain ATCC BAA-731 / CDC346-86 / RSK2980).